The chain runs to 273 residues: NADH-ubiquinone oxidoreductase 29.9 kDa subunit, mitochondrial (273 aa).

A mitochondrion-targeting transit peptide spans 1 to 8; that stretch reads MRAALRLL.

This sequence belongs to the complex I NDUFA5 subunit family. In terms of assembly, complex I is composed of about 40 different subunits.

The protein resides in the mitochondrion inner membrane. Functionally, accessory subunit of the mitochondrial membrane respiratory chain NADH dehydrogenase (Complex I), that is believed not to be involved in catalysis. Complex I functions in the transfer of electrons from NADH to the respiratory chain. The immediate electron acceptor for the enzyme is believed to be ubiquinone. In Neurospora crassa (strain ATCC 24698 / 74-OR23-1A / CBS 708.71 / DSM 1257 / FGSC 987), this protein is NADH-ubiquinone oxidoreductase 29.9 kDa subunit, mitochondrial (nuo-32).